Here is a 192-residue protein sequence, read N- to C-terminus: Leucine-rich repeat-containing protein 51 (192 aa).

LRR repeat units follow at residues 49–71 (SLTQSLWLNNNVLNDLRDFNQVA), 80–101 (NLAWIDLSFNDLTSIDPVLTTF), and 103–124 (NLSVLYLHGNSIQHLGEVNKLA). The region spanning 137–175 (NPMEEEKGYRQYVLCTLPHITTFDFSGVTKADRTTAEVW) is the LRRCT domain.

It localises to the cytoplasm. This Macaca mulatta (Rhesus macaque) protein is Leucine-rich repeat-containing protein 51.